Consider the following 78-residue polypeptide: Leukemia-associated protein 1 (78 aa).

Its function is as follows. May act as a tumor suppressor. In Homo sapiens (Human), this protein is Leukemia-associated protein 1 (DLEU1).